The following is a 179-amino-acid chain: Prion-like protein doppel (179 aa).

Residues 1–25 form the signal peptide; it reads MKNRLGTWWVAILCMLLASHLSTVK. The tract at residues 27 to 50 is flexible tail; it reads RGIKHRFKWNRKVLPSSGGQITEA. The tract at residues 51-155 is globular; the sequence is RVAENRPGAF…KHCDFWLERG (105 aa). 2 disulfide bridges follow: Cys95–Cys148 and Cys109–Cys143. N-linked (GlcNAc...) asparagine glycans are attached at residues Asn99 and Asn111. The cu(2+) binding stretch occupies residues 125–142; sequence KQDSKLHQRVLWRLIKEI. The GPI-anchor amidated glycine moiety is linked to residue Gly155. The propeptide at 156–179 is removed in mature form; it reads AALRVAVDQPAMVCLLGFVWFIVK.

This sequence belongs to the prion family. In terms of processing, N-glycosylated. N-glycosylated at two distinct sites. Post-translationally, O-glycosylated. As to expression, detected in testis. Detected within seminiferous tubules, on round and elongated spermatids (at protein level). Not detected in brain (at protein level). Detected in testis, and at low levels in heart. Expression in brain is very low and barely detectable.

It localises to the cell membrane. In terms of biological role, required for normal acrosome reaction and for normal male fertility. Can bind Cu(2+). This is Prion-like protein doppel (Prnd) from Mus musculus (Mouse).